A 269-amino-acid polypeptide reads, in one-letter code: MSEGKKRSRGGLAIISPPKRRSQRKSTSDSPIPEPIMKRSITVKKIMPRKTLAAIVNTGSQSTPKVSNVPPAPRRSSRISPKIQKENAFSEQSQIVHKDVPGQSSAPKINVLSPIPVNIQLSPKQDNRDIIMSQKVRRSYSRLEMSLNSSSSLYSPTRKTDSSDTSTPNVVLKSGRSSLFGFDKLLNSEMPDGELKKSNGVTRKKNTKERILGTVLPEQPDHNIPGVVLAKQKRRKRKVAIIEKSDLDEWAAFMNAEFEEAEKFDLTVE.

Disordered stretches follow at residues 1–39 (MSEG…IMKR), 56–110 (VNTG…PKIN), and 146–169 (SLNS…STPN). Positions 57–66 (NTGSQSTPKV) are enriched in polar residues. The KEN box signature appears at 85–87 (KEN). Positions 146–155 (SLNSSSSLYS) are enriched in low complexity. Positions 180-182 (FGF) match the FGF motif motif. The tract at residues 247 to 269 (LDEWAAFMNAEFEEAEKFDLTVE) is C-terminal Sororin domain.

It belongs to the sororin family. Interacts with the APC/C complex. Interacts with the chromatin-bound cohesin complex; the interaction is indirect, occurs after DNA replication and requires acetylation of the cohesin component smc3. Interacts (via the FGF motif) with pds5a and pds5b; the interaction is direct and prevents the interaction of pds5a with wapl. Ubiquitinated by the APC/C complex in G1, leading to its degradation.

The protein resides in the nucleus. The protein localises to the chromosome. It is found in the cytoplasm. Regulator of sister chromatid cohesion in mitosis stabilizing cohesin complex association with chromatin. May antagonize the action of wapl which stimulates cohesin dissociation from chromatin. Cohesion ensures that chromosome partitioning is accurate in both meiotic and mitotic cells and plays an important role in DNA repair. Required for efficient DNA double-stranded break repair. The chain is Sororin (cdca5-a) from Xenopus laevis (African clawed frog).